The following is a 341-amino-acid chain: UDP-N-acetylenolpyruvoylglucosamine reductase (341 aa).

In terms of domain architecture, FAD-binding PCMH-type spans 15–185 (VEQSCLSLIE…TAVGLRLPKA (171 aa)). Arginine 161 is an active-site residue. Serine 231 (proton donor) is an active-site residue. The active site involves glutamate 327.

It belongs to the MurB family. FAD is required as a cofactor.

The protein localises to the cytoplasm. The enzyme catalyses UDP-N-acetyl-alpha-D-muramate + NADP(+) = UDP-N-acetyl-3-O-(1-carboxyvinyl)-alpha-D-glucosamine + NADPH + H(+). The protein operates within cell wall biogenesis; peptidoglycan biosynthesis. In terms of biological role, cell wall formation. The sequence is that of UDP-N-acetylenolpyruvoylglucosamine reductase from Shewanella sp. (strain ANA-3).